A 178-amino-acid polypeptide reads, in one-letter code: ATP synthase subunit delta (178 aa).

The protein belongs to the ATPase delta chain family. As to quaternary structure, F-type ATPases have 2 components, F(1) - the catalytic core - and F(0) - the membrane proton channel. F(1) has five subunits: alpha(3), beta(3), gamma(1), delta(1), epsilon(1). F(0) has three main subunits: a(1), b(2) and c(10-14). The alpha and beta chains form an alternating ring which encloses part of the gamma chain. F(1) is attached to F(0) by a central stalk formed by the gamma and epsilon chains, while a peripheral stalk is formed by the delta and b chains.

The protein resides in the cell membrane. Functionally, f(1)F(0) ATP synthase produces ATP from ADP in the presence of a proton or sodium gradient. F-type ATPases consist of two structural domains, F(1) containing the extramembraneous catalytic core and F(0) containing the membrane proton channel, linked together by a central stalk and a peripheral stalk. During catalysis, ATP synthesis in the catalytic domain of F(1) is coupled via a rotary mechanism of the central stalk subunits to proton translocation. In terms of biological role, this protein is part of the stalk that links CF(0) to CF(1). It either transmits conformational changes from CF(0) to CF(1) or is implicated in proton conduction. The polypeptide is ATP synthase subunit delta (Anoxybacillus flavithermus (strain DSM 21510 / WK1)).